Reading from the N-terminus, the 559-residue chain is Probable inorganic carbon transporter subunit DabB1 (559 aa).

Transmembrane regions (helical) follow at residues 4–24, 33–53, 76–96, 106–126, 173–193, 202–222, 240–260, 273–293, 310–330, 375–395, 408–428, 440–460, and 487–507; these read LQWL…LFAA, LSVA…VAYI, LSSI…VYSI, PRFF…VAAG, LVLA…PTLF, ATIM…LSAF, GPTP…GFII, VLHM…VLML, MGFM…FHLI, LPWL…LVIA, GAIV…FATH, MMIL…GHAF, and GLVF…YLAS.

This sequence belongs to the inorganic carbon transporter (TC 9.A.2) DabB family. In terms of assembly, forms a complex with DabA1.

The protein resides in the cell inner membrane. Its function is as follows. Part of an energy-coupled inorganic carbon pump. This Halothiobacillus neapolitanus (strain ATCC 23641 / c2) (Thiobacillus neapolitanus) protein is Probable inorganic carbon transporter subunit DabB1.